The chain runs to 256 residues: Probable succinate transporter subunit YjjP (256 aa).

Residues 1 to 113 are Cytoplasmic-facing; that stretch reads MQTEQQRAVT…KRFSQIQPLR (113 aa). The chain crosses the membrane as a helical span at residues 114–135; it reads YPRWLVALMVGLSCACFCKLNN. Residues 136 to 140 lie on the Periplasmic side of the membrane; it reads GGWDG. The helical transmembrane segment at 141–158 threads the bilayer; that stretch reads AVITFFASTTAMYIRQLL. Residues 159–168 lie on the Cytoplasmic side of the membrane; that stretch reads AQRHLHPQIN. The helical transmembrane segment at 169–189 threads the bilayer; the sequence is FCLTAFAATTISGLLLQLPTF. Residues 190 to 194 are Periplasmic-facing; it reads SNTPT. Residues 195–215 form a helical membrane-spanning segment; the sequence is IAMAASVLLLVPGFPLINAVA. The Cytoplasmic segment spans residues 216–228; sequence DMFKGHINTGLAR. A helical transmembrane segment spans residues 229–249; sequence WAIASLLTLATCVGVVMALTI. Residues 250–256 lie on the Periplasmic side of the membrane; sequence WGLRGWV.

Belongs to the ThrE exporter (TC 2.A.79) family. As to quaternary structure, the transporter is composed of YjjB and YjjP.

It is found in the cell inner membrane. Involved in succinate export with YjjB. Both proteins are required for export. Contributes to succinate production under both aerobic and anaerobic conditions. The protein is Probable succinate transporter subunit YjjP (yjjP) of Escherichia coli (strain K12).